A 244-amino-acid polypeptide reads, in one-letter code: MKLLKNKKVTFVALLAILAVLSTQSVSAMHIMEGYLPLFWCIFWFAVFLPFFVVGLMRIKKIVAEDPNSKTMLALSGAFIFILSSLKIPSVTGSSSHPTGVGLGTAMFGPSVISVLGTICLLFQALLLAHGGLTTLGANAFSMAVVGPFVGYFVYKFAKSIKLSTPVSIFICAVIADLATYATTSIQLGLVFPDANSGFVGSALKFMGVFLTTQIPIAIVEGLLTVVLYNLISENVKERAGLFK.

A signal peptide spans 1–28 (MKLLKNKKVTFVALLAILAVLSTQSVSA). A run of 6 helical transmembrane segments spans residues 36 to 56 (LPLF…VVGL), 71 to 91 (TMLA…IPSV), 108 to 128 (FGPS…ALLL), 135 to 155 (TLGA…YFVY), 166 to 186 (PVSI…TTSI), and 208 to 228 (GVFL…TVVL).

This sequence belongs to the CbiM family. Forms an energy-coupling factor (ECF) transporter complex composed of an ATP-binding protein (A component, CbiO), a transmembrane protein (T component, CbiQ) and 2 possible substrate-capture proteins (S components, CbiM and CbiN) of unknown stoichimetry.

It localises to the cell membrane. It functions in the pathway cofactor biosynthesis; adenosylcobalamin biosynthesis. Functionally, part of the energy-coupling factor (ECF) transporter complex CbiMNOQ involved in cobalt import. The polypeptide is Cobalt transport protein CbiM (Streptococcus sanguinis (strain SK36)).